The following is a 399-amino-acid chain: Mitochondrial glycine transporter (399 aa).

Solcar repeat units lie at residues 35–137 (IPPY…LRSV), 164–251 (LSTT…CKTN), and 266–374 (GNWM…GRSW). The next 6 helical transmembrane spans lie at 41–66 (LAFG…TRLQ), 112–138 (GTAP…RSVA), 170–195 (LLTG…ARFE), 226–249 (GFTA…EACK), 270–296 (VVSA…KTRM), and 349–367 (GLGL…GWSI). The interval 379-399 (EASSSAQEAGTGTRLLDHKQV) is disordered.

Belongs to the mitochondrial carrier (TC 2.A.29) family. SLC25A38 subfamily.

The protein localises to the mitochondrion inner membrane. It carries out the reaction glycine(in) = glycine(out). In terms of biological role, mitochondrial glycine transporter that imports glycine into the mitochondrial matrix. Plays an important role in providing glycine for the first enzymatic step in heme biosynthesis, the condensation of glycine with succinyl-CoA to produce 5-aminolevulinate (ALA) in the mitochondrial matrix. This Mycosarcoma maydis (Corn smut fungus) protein is Mitochondrial glycine transporter.